The following is a 726-amino-acid chain: Catalase-peroxidase (726 aa).

The segment at 1-25 (MDAKTDDSAGKCPFTGGGRRGHRNR) is disordered. The segment at residues 96–218 (WHSAGTYRIT…LAAVQMGLIY (123 aa)) is a cross-link (tryptophyl-tyrosyl-methioninium (Trp-Tyr) (with M-244)). The active-site Proton acceptor is the H97. A cross-link (tryptophyl-tyrosyl-methioninium (Tyr-Met) (with W-96)) is located at residues 218–244 (YVNPEGPNGNPDPVAAAKDIRETFYRM). H259 is a binding site for heme b.

It belongs to the peroxidase family. Peroxidase/catalase subfamily. In terms of assembly, homodimer or homotetramer. Requires heme b as cofactor. Formation of the three residue Trp-Tyr-Met cross-link is important for the catalase, but not the peroxidase activity of the enzyme.

It carries out the reaction H2O2 + AH2 = A + 2 H2O. The catalysed reaction is 2 H2O2 = O2 + 2 H2O. Bifunctional enzyme with both catalase and broad-spectrum peroxidase activity. The polypeptide is Catalase-peroxidase (Chelativorans sp. (strain BNC1)).